Here is a 101-residue protein sequence, read N- to C-terminus: Pro-corazonin (101 aa).

A signal peptide spans 1–19 (MVTNITLILTLMTLASVTA). Position 20 is a pyrrolidone carboxylic acid (Gln20). Asn30 bears the Asparagine amide mark.

The protein belongs to the corazonin family.

It is found in the secreted. Functionally, cardioactive peptide. Corazonin is probably involved in the physiological regulation of the heart beat. The protein is Pro-corazonin (crz) of Bombyx mori (Silk moth).